Reading from the N-terminus, the 492-residue chain is Proline--tRNA ligase (492 aa).

This sequence belongs to the class-II aminoacyl-tRNA synthetase family. ProS type 3 subfamily. Homodimer.

It localises to the cytoplasm. The catalysed reaction is tRNA(Pro) + L-proline + ATP = L-prolyl-tRNA(Pro) + AMP + diphosphate. Its function is as follows. Catalyzes the attachment of proline to tRNA(Pro) in a two-step reaction: proline is first activated by ATP to form Pro-AMP and then transferred to the acceptor end of tRNA(Pro). This Flavobacterium johnsoniae (strain ATCC 17061 / DSM 2064 / JCM 8514 / BCRC 14874 / CCUG 350202 / NBRC 14942 / NCIMB 11054 / UW101) (Cytophaga johnsonae) protein is Proline--tRNA ligase.